A 312-amino-acid chain; its full sequence is Protein YIPF2 (312 aa).

A2 carries the N-acetylalanine modification. Residues 2-121 (AAADELAFHE…LRNRPDLYGP (120 aa)) are Cytoplasmic-facing. Residues 122 to 142 (FWICATLAFVLAVTGNLTLVL) traverse the membrane as a helical segment. Residues 143–160 (AQRRDPSIHYSPQFHKVT) are Lumenal-facing. Residues 161–181 (IAGITIYCYAWLVPLALWGFL) form a helical membrane-spanning segment. Over 182–193 (RWRQGTRERMGL) the chain is Cytoplasmic. The helical transmembrane segment at 194–216 (YTFLETVCVYGYSLFVFIPTVVL) threads the bilayer. The Lumenal segment spans residues 217 to 228 (WLIPVQWIQWLF). A helical membrane pass occupies residues 229–249 (GALGLALSAAGLVFTLWPVVR). Over 250-253 (EDTR) the chain is Cytoplasmic. Residues 254–274 (LVAAALLSTVVLLHALLALGC) form a helical membrane-spanning segment. The Lumenal portion of the chain corresponds to 275–312 (KLYFFQPLPLDHVVPAPQATPPSPNVLLPSSIQPMTTS).

It belongs to the YIP1 family. Interacts with YIPF6; this interaction may stabilize YIPF2. May also form a ternary complex with YIPF1 and YIPF6.

The protein resides in the golgi apparatus. It localises to the cis-Golgi network membrane. It is found in the trans-Golgi network membrane. The protein localises to the late endosome membrane. This chain is Protein YIPF2 (Yipf2), found in Mus musculus (Mouse).